A 460-amino-acid polypeptide reads, in one-letter code: uncharacterized protein (460 aa).

Positions 6–64 (PVKKNNDYEIYIDDFGNMGEGIGKIDNFTVFVKDAVKGEKVRAKIIKVNKSFAIGKLID) constitute a TRAM domain. The [4Fe-4S] cluster site is built by Cys77, Cys83, Cys86, and Cys166. 4 residues coordinate S-adenosyl-L-methionine: Gln290, Tyr319, Glu340, and Asp388. Cys415 functions as the Nucleophile in the catalytic mechanism.

It belongs to the class I-like SAM-binding methyltransferase superfamily. RNA M5U methyltransferase family.

This is an uncharacterized protein from Clostridium acetobutylicum (strain ATCC 824 / DSM 792 / JCM 1419 / IAM 19013 / LMG 5710 / NBRC 13948 / NRRL B-527 / VKM B-1787 / 2291 / W).